The sequence spans 491 residues: Acetylcholine receptor subunit epsilon (491 aa).

Residues Met-1 to Gly-20 form the signal peptide. Residues Lys-21 to Lys-239 are Extracellular-facing. N-linked (GlcNAc...) asparagine glycans are attached at residues Asn-86 and Asn-161. Cysteines 148 and 162 form a disulfide. Residues Pro-240–Leu-264 traverse the membrane as a helical segment. Residues Pro-265–Lys-272 lie on the Cytoplasmic side of the membrane. The chain crosses the membrane as a helical span at residues Cys-273–Ala-291. The Extracellular portion of the chain corresponds to Gln-292–Arg-306. The chain crosses the membrane as a helical span at residues Tyr-307–Val-328. The Cytoplasmic portion of the chain corresponds to Ser-329–Ser-456. Residues Ile-457 to Asn-480 form a helical membrane-spanning segment. Topologically, residues Arg-481–Met-491 are extracellular.

It belongs to the ligand-gated ion channel (TC 1.A.9) family. Acetylcholine receptor (TC 1.A.9.1) subfamily. Epsilon/CHRNE sub-subfamily.

The protein resides in the postsynaptic cell membrane. The protein localises to the cell membrane. The catalysed reaction is K(+)(in) = K(+)(out). It carries out the reaction Na(+)(in) = Na(+)(out). Functionally, after binding acetylcholine, the AChR responds by an extensive change in conformation that affects all subunits and leads to opening of an ion-conducting channel across the plasma membrane. The chain is Acetylcholine receptor subunit epsilon (CHRNE) from Bos taurus (Bovine).